The chain runs to 401 residues: Probable thioesterase FGSG_00047 (401 aa).

A disordered region spans residues 379–401 (AREMDQRKRQKDFTHTTIHDKNS).

Belongs to the AMT4 thioesterase family.

Its pathway is mycotoxin biosynthesis. Probable thioesterase; part of the gene cluster that mediates the biosynthesis of gramillins A and B, bicyclic lipopeptides that induce cell death in maize leaves but not in wheat leaves. The nonribosomal peptide synthetase GRA1 incorporates respectively a glutamic adic (Glu), a leucine (Leu), a serine (Ser), a hydroxyglutamine (HOGln), a 2-amino decanoic acid, and 2 cysteins (CysB and CysA). The biosynthesis of 2-amino decanoic acid incorporated in gramillins could be initiated by a fatty acid synthase composed of the alpha and beta subunits FGSG_00036 and FGSG_11656. The cytochrome P450 monooxygenase FGSG_15680 could hydroxylate the fatty acid chain. Subsequent oxidation to the ketone by the oxidoreductase FGSG_00048 and transamination by aminotransferase FGSG_00049 could form 2-amino-decanoic acid. On the other hand, FGSG_15680 could also be responsible for the HO-modified glutamine at the gamma-position. Whether hydroxylation occurs on the fully assembled product or on the Gln residue prior to assembly into the gramillins requires further proof. The thioredoxin FGSG_00043 could also be required for the disulfide-bond formation between CysA and CysB. The specific involvement of the remaining proteins from the cluster is more difficult to discern, but could have broader regulatory (FGSG_00040 and FGSG_11657) or enzymatic functions (FGSG_00044 and FGSG_00045). The final C-domain of GRA1 does not possess the expected sequence of a termination CT domain, often implicated in macrocyclization and release of a cyclopeptidein fungal NRPs; and the thioesterase FGSG_00047 may act in concert with the terminal C-domain of GRA1 to catalyze the formation of the macrocyclic anhydride and release of the products. The chain is Probable thioesterase FGSG_00047 from Gibberella zeae (strain ATCC MYA-4620 / CBS 123657 / FGSC 9075 / NRRL 31084 / PH-1) (Wheat head blight fungus).